Reading from the N-terminus, the 613-residue chain is 8-methylmenaquinol:fumarate reductase flavoprotein subunit (613 aa).

The tat-type signal signal peptide spans 1–33; sequence MSEQFTRREFLQSACITMGALAVSTSGVDRAFA. FAD-binding positions include 53–58, 78–93, and D255; these read GSGAAG and SKVMPTRSATTMAEGG. Substrate-binding residues include H276 and T288. The Proton acceptor role is filled by R319. H387 is a substrate binding site. E413 lines the FAD pocket. R424 lines the substrate pocket. 429–430 is a binding site for FAD; it reads SL.

The protein belongs to the FAD-dependent oxidoreductase 2 family. FRD/SDH subfamily. The MFR complex is composed of three subunits: a flavoprotein (SdhA), an iron-sulfur protein (SdhB), and one hydrophobic anchor protein (SdhE). The cofactor is FAD. Predicted to be exported by the Tat system. The position of the signal peptide cleavage has not been experimentally proven.

It localises to the periplasm. The protein localises to the cell membrane. The catalysed reaction is 8-methylmenaquinone-6 + succinate = 8-methylmenaquinol-6 + fumarate. Flavoprotein subunit of 8-methylmenaquinol:fumarate reductase (MFR), that catalyzes the reduction of fumarate using 8-methylmenaquinol-6 as electron donor. The complex shows no succinate oxidation activity. Is involved in anaerobic metabolism. SdhA contains the dicarboxylate reduction site. This is 8-methylmenaquinol:fumarate reductase flavoprotein subunit from Wolinella succinogenes (strain ATCC 29543 / DSM 1740 / CCUG 13145 / JCM 31913 / LMG 7466 / NCTC 11488 / FDC 602W) (Vibrio succinogenes).